The chain runs to 313 residues: PDCD10 and GCKIII kinases-associated protein 1 (313 aa).

Positions 42–95 are disordered; that stretch reads KGTQNSEVEVPGSTLHSGSLSKPDSSGSTTGLPCQGSLTQEDSEERPCVEKHGI. Positions 58–69 are enriched in low complexity; the sequence is SGSLSKPDSSGS. Ser-60 is subject to Phosphoserine. Residues 70–81 are compositionally biased toward polar residues; it reads TTGLPCQGSLTQ. The residue at position 104 (Thr-104) is a Phosphothreonine. A phosphoserine mark is found at Ser-107, Ser-237, and Ser-240. The interval 253 to 288 is disordered; the sequence is YFKEEDPTQPTPVADPGNEREDPHTYNGNKEGAVVD.

Interacts with KEAP1; this interaction prevents the ubiquitination of KEAP1 by TRIM25, thus protecting KEAP1 from degradation. Found in association with PDCD10 and members of the STE20 kinases, such as STK24, STK25, and STK26.

Its subcellular location is the cell membrane. Functionally, acts as a tumor suppressor. Acts as a tumor suppressor for colorectal cancer cell proliferation by targeting KEAP1/USP17/ELK1/CDK6 axis. The protein is PDCD10 and GCKIII kinases-associated protein 1 of Rattus norvegicus (Rat).